The primary structure comprises 44 residues: MRDIKTYLSVAPVISTLWFGSLAGLLIEINRLFPDALVFPFFSF.

Residues 7 to 27 traverse the membrane as a helical segment; sequence YLSVAPVISTLWFGSLAGLLI.

It belongs to the PsaJ family.

It localises to the plastid. The protein resides in the chloroplast thylakoid membrane. Its function is as follows. May help in the organization of the PsaE and PsaF subunits. The chain is Photosystem I reaction center subunit IX from Ceratophyllum demersum (Rigid hornwort).